Reading from the N-terminus, the 805-residue chain is 1,4-alpha-glucan-branching enzyme 2-2, chloroplastic/amyloplastic (805 aa).

The N-terminal 32 residues, 1–32 (MVVIHGVSLTPRFTLPSRPLNTGFNAGNSTLS), are a transit peptide targeting the chloroplast. The Nucleophile role is filled by Asp-451. The active-site Proton donor is the Glu-506.

This sequence belongs to the glycosyl hydrolase 13 family. GlgB subfamily. In terms of assembly, monomer. In terms of tissue distribution, expressed in seedlings, roots, stems, leaves, inflorescences, seeds and flowers.

It localises to the plastid. The protein localises to the chloroplast stroma. It is found in the amyloplast. It carries out the reaction Transfers a segment of a (1-&gt;4)-alpha-D-glucan chain to a primary hydroxy group in a similar glucan chain.. It functions in the pathway glycan biosynthesis; starch biosynthesis. In terms of biological role, catalyzes the formation of the alpha-1,6-glucosidic linkages in starch by scission of a 1,4-alpha-linked oligosaccharide from growing alpha-1,4-glucan chains and the subsequent attachment of the oligosaccharide to the alpha-1,6 position. This Arabidopsis thaliana (Mouse-ear cress) protein is 1,4-alpha-glucan-branching enzyme 2-2, chloroplastic/amyloplastic (SBE2.2).